We begin with the raw amino-acid sequence, 211 residues long: MEKKVYSVDGKELRTINLDDKVFGLPVNDDVIYYAINNELANKRVGTACTKGRAEVHGSNSKPYSQKGTGRARRGDKKSPLLVGGGTIFGPKPRDFSYSMPKKAKRLAMKSILSLKAQNDRLVVVEDFTVESGKTRDLVKILDNFAKGERAVIILKDDDSLVKRAGRNIPHLSFLAYNRLRAHDLFYGRKVIMLESAAKNLSEFYGCKEAE.

The disordered stretch occupies residues 52–79; that stretch reads GRAEVHGSNSKPYSQKGTGRARRGDKKS. Over residues 58–68 the composition is skewed to polar residues; sequence GSNSKPYSQKG.

It belongs to the universal ribosomal protein uL4 family. As to quaternary structure, part of the 50S ribosomal subunit.

In terms of biological role, one of the primary rRNA binding proteins, this protein initially binds near the 5'-end of the 23S rRNA. It is important during the early stages of 50S assembly. It makes multiple contacts with different domains of the 23S rRNA in the assembled 50S subunit and ribosome. Its function is as follows. Forms part of the polypeptide exit tunnel. This Treponema denticola (strain ATCC 35405 / DSM 14222 / CIP 103919 / JCM 8153 / KCTC 15104) protein is Large ribosomal subunit protein uL4.